Consider the following 468-residue polypeptide: MGWRQLDIDKVHLALIVAGGFITFFCYFSEVFRKKLLVGEAVLGSITGLIFGPHAAKLVDPFSWGDHGDYLTVEICRIVLDVRVFASAIELPGAYFQHNFRSIIVMLLPVMAYGWLVTAGFAYALFPQINFLGSLLIAGCITSTDPVLSALIVGEGPLAKKTPERIRSLLIAESGCNDGMAVPFFYFAIKLLTVKPSRNAGRDWVLLVVLYECAFGIFFGCVIGYLLSFILKHAQKYRLIDAISYYSLPLAIPLLCSGIGTIIGVDDLLMSFFAGILFNWNDLFSKNISACSVPAFIDQTFSLLFFTYYGTIIPWNNFNWSVEGLPVWRLIVFSILTLVCRRLPVVFSVKPLVPDIKTWKEALFVGHFGPIGVCAVYMAFLAKLLLSPDEIEKSIYESTTVFSTLNEIIWPIISFVILSSIIVHGFSIHVLVIWGKLKSLYLNRKVTKSDSDLELQVIGVDKSQEDYV.

The next 8 helical transmembrane spans lie at 12 to 32 (HLALIVAGGFITFFCYFSEVF), 36 to 56 (LLVGEAVLGSITGLIFGPHAA), 81 to 96 (DVRVFASAIELPGAYF), 103 to 123 (IIVMLLPVMAYGWLVTAGFAY), 133 to 153 (GSLLIAGCITSTDPVLSALIV), 169 to 189 (LLIAESGCNDGMAVPFFYFAI), 204 to 224 (WVLLVVLYECAFGIFFGCVIG), and 258 to 278 (GIGTIIGVDDLLMSFFAGILF). Asparagine 287 carries N-linked (GlcNAc...) asparagine glycosylation. The helical transmembrane segment at 293–313 (VPAFIDQTFSLLFFTYYGTII) threads the bilayer. An N-linked (GlcNAc...) asparagine glycan is attached at asparagine 319. 3 consecutive transmembrane segments (helical) span residues 320–340 (WSVEGLPVWRLIVFSILTLVC), 362–382 (ALFVGHFGPIGVCAVYMAFLA), and 408–428 (IIWPIISFVILSSIIVHGFSI). A phosphoserine mark is found at serine 449 and serine 451.

Belongs to the fungal Na(+)/H(+) exchanger family.

Its subcellular location is the cell membrane. Sodium export from cell, takes up external protons in exchange for internal sodium ions. Involved in regulation of pH. In Schizosaccharomyces pombe (strain 972 / ATCC 24843) (Fission yeast), this protein is Na(+)/H(+) antiporter.